Consider the following 282-residue polypeptide: Pantothenate synthetase (282 aa).

26–33 (MGNLHDGH) contributes to the ATP binding site. The Proton donor role is filled by His-33. Gln-57 is a binding site for (R)-pantoate. Gln-57 serves as a coordination point for beta-alanine. 148–151 (GKKD) contributes to the ATP binding site. Residue Gln-154 coordinates (R)-pantoate. 185–188 (LSSR) is an ATP binding site.

Belongs to the pantothenate synthetase family. In terms of assembly, homodimer.

It is found in the cytoplasm. It catalyses the reaction (R)-pantoate + beta-alanine + ATP = (R)-pantothenate + AMP + diphosphate + H(+). It participates in cofactor biosynthesis; (R)-pantothenate biosynthesis; (R)-pantothenate from (R)-pantoate and beta-alanine: step 1/1. Its function is as follows. Catalyzes the condensation of pantoate with beta-alanine in an ATP-dependent reaction via a pantoyl-adenylate intermediate. The protein is Pantothenate synthetase of Polaromonas sp. (strain JS666 / ATCC BAA-500).